The primary structure comprises 170 residues: Photosystem I assembly protein Ycf3 (170 aa).

TPR repeat units lie at residues 35–69 (AFTY…EIDP), 73–106 (SYIL…NPSL), and 121–154 (GEQA…APGN).

It belongs to the Ycf3 family.

The protein resides in the plastid. Its subcellular location is the chloroplast thylakoid membrane. Its function is as follows. Essential for the assembly of the photosystem I (PSI) complex. May act as a chaperone-like factor to guide the assembly of the PSI subunits. In Cycas taitungensis (Prince sago), this protein is Photosystem I assembly protein Ycf3.